The chain runs to 380 residues: Palmitoyltransferase ZDHHC20 (380 aa).

The Cytoplasmic segment spans residues 1–14 (MAPWTLWRCCQRVV). The chain crosses the membrane as a helical span at residues 15–35 (GWVPVLFITFVVVWSYYAYVV). Residues 36-53 (ELCVSTISRTGEKGKTVV) are Lumenal-facing. The chain crosses the membrane as a helical span at residues 54-74 (YLVAFHLFFVMFVWSYWMTIF). Over 75 to 169 (TSPASPSKEF…NNCVGFTNYK (95 aa)) the chain is Cytoplasmic. Residues 126–176 (RYCEKCQLIKPDRAHHCSACDRCVLKMDHHCPWVNNCVGFTNYKFFMLFLL) form the DHHC domain. Zn(2+)-binding residues include C128 and C131. Substrate is bound by residues K135 and 140 to 143 (HHCS). Residues H141, C142, C145, C148, and H155 each contribute to the Zn(2+) site. Catalysis depends on C156, which acts as the S-palmitoyl cysteine intermediate. Zn(2+) is bound at residue C162. Residues 170–190 (FFMLFLLYSLLYCLFVAATVL) traverse the membrane as a helical segment. Residues 191–222 (EYFIKFWTLCRRKSTENCPKNEPTVLNFPSAK) are Lumenal-facing. Residues 223–246 (FHVLFLFFVSAMFFVSVLSLFSYH) traverse the membrane as a helical segment. The Cytoplasmic segment spans residues 247 to 380 (CWLVGKNRTT…NNHVTVEIEN (134 aa)). 3 positions are modified to phosphoserine: S320, S345, and S354.

Belongs to the DHHC palmitoyltransferase family. In terms of processing, autopalmitoylated (in vitro). Highest levels in lung.

It localises to the golgi apparatus membrane. Its subcellular location is the cell membrane. The protein resides in the cytoplasm. It is found in the perinuclear region. The protein localises to the endoplasmic reticulum membrane. It localises to the endoplasmic reticulum-Golgi intermediate compartment membrane. It carries out the reaction L-cysteinyl-[protein] + hexadecanoyl-CoA = S-hexadecanoyl-L-cysteinyl-[protein] + CoA. It catalyses the reaction L-cysteinyl-[protein] + tetradecanoyl-CoA = S-tetradecanoyl-L-cysteinyl-[protein] + CoA. The enzyme catalyses L-cysteinyl-[protein] + octadecanoyl-CoA = S-octadecanoyl-L-cysteinyl-[protein] + CoA. Its function is as follows. Palmitoyltransferase that could catalyze the addition of palmitate onto various protein substrates. Catalyzes palmitoylation of Cys residues in the cytoplasmic C-terminus of EGFR, and modulates the duration of EGFR signaling by modulating palmitoylation-dependent EGFR internalization and degradation. Has a preference for acyl-CoA with C16 fatty acid chains. Can also utilize acyl-CoA with C14 and C18 fatty acid chains. May palmitoylate CALHM1 subunit of gustatory voltage-gated ion channels and modulate channel gating and kinetics. The protein is Palmitoyltransferase ZDHHC20 of Mus musculus (Mouse).